The sequence spans 105 residues: Met repressor (105 aa).

Belongs to the MetJ family. In terms of assembly, homodimer.

The protein resides in the cytoplasm. Functionally, this regulatory protein, when combined with SAM (S-adenosylmethionine) represses the expression of the methionine regulon and of enzymes involved in SAM synthesis. This Glaesserella parasuis serovar 5 (strain SH0165) (Haemophilus parasuis) protein is Met repressor.